Consider the following 284-residue polypeptide: Hemin import ATP-binding protein HmuV (284 aa).

One can recognise an ABC transporter domain in the interval 33–266; it reads LGARHLSKSY…KLLSDVYSYE (234 aa). Residue 65-72 participates in ATP binding; that stretch reads GPNGAGKS.

Belongs to the ABC transporter superfamily. Heme (hemin) importer (TC 3.A.1.14.5) family. The complex is composed of two ATP-binding proteins (HmuV), two transmembrane proteins (HmuU) and a solute-binding protein (HmuT).

It localises to the cell membrane. Functionally, part of the ABC transporter complex HmuTUV involved in hemin import. Responsible for energy coupling to the transport system. The protein is Hemin import ATP-binding protein HmuV of Thermobifida fusca (strain YX).